The chain runs to 105 residues: UPF0145 protein Mevan_1624 (105 aa).

This sequence belongs to the UPF0145 family.

The polypeptide is UPF0145 protein Mevan_1624 (Methanococcus vannielii (strain ATCC 35089 / DSM 1224 / JCM 13029 / OCM 148 / SB)).